The sequence spans 251 residues: Octanoyltransferase (251 aa).

The 186-residue stretch at 56–241 (AETPDEIWIV…NLDGASAAAD (186 aa)) folds into the BPL/LPL catalytic domain. Residues 96-103 (RGGQITYH), 168-170 (ALG), and 181-183 (GLS) each bind substrate. Cysteine 199 acts as the Acyl-thioester intermediate in catalysis.

The protein belongs to the LipB family.

It localises to the cytoplasm. The catalysed reaction is octanoyl-[ACP] + L-lysyl-[protein] = N(6)-octanoyl-L-lysyl-[protein] + holo-[ACP] + H(+). It functions in the pathway protein modification; protein lipoylation via endogenous pathway; protein N(6)-(lipoyl)lysine from octanoyl-[acyl-carrier-protein]: step 1/2. Its function is as follows. Catalyzes the transfer of endogenously produced octanoic acid from octanoyl-acyl-carrier-protein onto the lipoyl domains of lipoate-dependent enzymes. Lipoyl-ACP can also act as a substrate although octanoyl-ACP is likely to be the physiological substrate. The chain is Octanoyltransferase from Burkholderia vietnamiensis (strain G4 / LMG 22486) (Burkholderia cepacia (strain R1808)).